We begin with the raw amino-acid sequence, 585 residues long: Frizzled-5 (585 aa).

The N-terminal stretch at 1-26 is a signal peptide; the sequence is MARPDPSAPPSLLLLLLAQLVGRAAA. Residues 27-238 lie on the Extracellular side of the membrane; it reads ASKAPVCQEI…ADERTFATFW (212 aa). Positions 28–150 constitute an FZ domain; sequence SKAPVCQEIT…RDAEVLCMDY (123 aa). 5 disulfide bridges follow: C33-C94, C41-C87, C78-C116, C105-C147, and C109-C133. Residue N47 is glycosylated (N-linked (GlcNAc...) asparagine). N-linked (GlcNAc...) asparagine glycosylation is present at N151. Positions 156–179 are disordered; sequence TTAPPRPFPAKPTLPGPPGAPASG. A compositionally biased stretch (pro residues) spans 159-175; it reads PPRPFPAKPTLPGPPGA. A helical membrane pass occupies residues 239-259; the sequence is IGLWSVLCFISTSTTVATFLI. The Cytoplasmic portion of the chain corresponds to 260–270; sequence DMERFRYPERP. Residues 271 to 291 traverse the membrane as a helical segment; it reads IIFLSACYLCVSLGFLVRLVV. The Extracellular segment spans residues 292–315; sequence GHASVACSREHNHIHYETTGPALC. A helical membrane pass occupies residues 316–336; the sequence is TIVFLLVYFFGMASSIWWVIL. The Cytoplasmic portion of the chain corresponds to 337-358; that stretch reads SLTWFLAAGMKWGNEAIAGYAQ. Residues 359-379 traverse the membrane as a helical segment; the sequence is YFHLAAWLIPSVKSITALALS. Over 380 to 402 the chain is Extracellular; the sequence is SVDGDPVAGICYVGNQNLNSLRG. The helical transmembrane segment at 403 to 423 threads the bilayer; the sequence is FVLGPLVLYLLVGTLFLLAGF. The Cytoplasmic segment spans residues 424–449; that stretch reads VSLFRIRSVIKQGGTKTDKLEKLMIR. Residues 450-470 form a helical membrane-spanning segment; the sequence is IGIFTLLYTVPASIVVACYLY. At 471-500 the chain is on the extracellular side; sequence EQHYRESWEAALTCACPGHDTGQPRAKPEY. A helical membrane pass occupies residues 501 to 521; it reads WVLMLKYFMCLVVGITSGVWI. At 522–585 the chain is on the cytoplasmic side; the sequence is WSGKTVESWR…YHKQVSLSHV (64 aa). The Lys-Thr-X-X-X-Trp motif, mediates interaction with the PDZ domain of Dvl family members signature appears at 525–530; that stretch reads KTVESW. The PDZ-binding motif lies at 583-585; that stretch reads SHV.

The protein belongs to the G-protein coupled receptor Fz/Smo family. In terms of assembly, binding of unsaturated fatty acid molecules (via FZ domain) promotes homodimerization. Interacts with WNT2B. Interacts with WNT3A. Interacts with WNT7A. Interacts with GOPC. Ubiquitinated by RNF43 and ZNRF3, leading to its degradation by the proteasome.

It localises to the cell membrane. Its subcellular location is the golgi apparatus membrane. The protein localises to the synapse. The protein resides in the perikaryon. It is found in the cell projection. It localises to the dendrite. Its subcellular location is the axon. Receptor for Wnt proteins. Functions in the canonical Wnt/beta-catenin signaling pathway. In vitro activates WNT2, WNT10B, WNT5A, but not WNT2B or WNT4 signaling. In neurons, activation by WNT7A promotes formation of synapses. May be involved in transduction and intercellular transmission of polarity information during tissue morphogenesis and/or in differentiated tissues. Plays a role in yolk sac angiogenesis and in placental vascularization. Plays a role in ocular development. This Homo sapiens (Human) protein is Frizzled-5 (FZD5).